The chain runs to 312 residues: Tetraacyldisaccharide 4'-kinase (312 aa).

An ATP-binding site is contributed by 60-67 (IAGGSGKT).

This sequence belongs to the LpxK family.

It catalyses the reaction a lipid A disaccharide + ATP = a lipid IVA + ADP + H(+). It participates in glycolipid biosynthesis; lipid IV(A) biosynthesis; lipid IV(A) from (3R)-3-hydroxytetradecanoyl-[acyl-carrier-protein] and UDP-N-acetyl-alpha-D-glucosamine: step 6/6. Transfers the gamma-phosphate of ATP to the 4'-position of a tetraacyldisaccharide 1-phosphate intermediate (termed DS-1-P) to form tetraacyldisaccharide 1,4'-bis-phosphate (lipid IVA). The sequence is that of Tetraacyldisaccharide 4'-kinase from Helicobacter pylori (strain ATCC 700392 / 26695) (Campylobacter pylori).